The following is a 336-amino-acid chain: Holliday junction branch migration complex subunit RuvB (336 aa).

The interval 4-184 (SDRLISSQSI…FGIVQRLEYY (181 aa)) is large ATPase domain (RuvB-L). Residues isoleucine 23, arginine 24, glycine 65, lysine 68, threonine 69, threonine 70, 131-133 (EDY), arginine 174, tyrosine 184, and arginine 221 each bind ATP. Threonine 69 is a Mg(2+) binding site. The small ATPAse domain (RuvB-S) stretch occupies residues 185–255 (SVDSLTQIVA…MAQQALEMLE (71 aa)). The segment at 258-336 (QHGFDLMDRK…HFGFSAIEQE (79 aa)) is head domain (RuvB-H). Residues arginine 313 and arginine 318 each coordinate DNA.

The protein belongs to the RuvB family. In terms of assembly, homohexamer. Forms an RuvA(8)-RuvB(12)-Holliday junction (HJ) complex. HJ DNA is sandwiched between 2 RuvA tetramers; dsDNA enters through RuvA and exits via RuvB. An RuvB hexamer assembles on each DNA strand where it exits the tetramer. Each RuvB hexamer is contacted by two RuvA subunits (via domain III) on 2 adjacent RuvB subunits; this complex drives branch migration. In the full resolvosome a probable DNA-RuvA(4)-RuvB(12)-RuvC(2) complex forms which resolves the HJ.

It is found in the cytoplasm. The enzyme catalyses ATP + H2O = ADP + phosphate + H(+). Functionally, the RuvA-RuvB-RuvC complex processes Holliday junction (HJ) DNA during genetic recombination and DNA repair, while the RuvA-RuvB complex plays an important role in the rescue of blocked DNA replication forks via replication fork reversal (RFR). RuvA specifically binds to HJ cruciform DNA, conferring on it an open structure. The RuvB hexamer acts as an ATP-dependent pump, pulling dsDNA into and through the RuvAB complex. RuvB forms 2 homohexamers on either side of HJ DNA bound by 1 or 2 RuvA tetramers; 4 subunits per hexamer contact DNA at a time. Coordinated motions by a converter formed by DNA-disengaged RuvB subunits stimulates ATP hydrolysis and nucleotide exchange. Immobilization of the converter enables RuvB to convert the ATP-contained energy into a lever motion, pulling 2 nucleotides of DNA out of the RuvA tetramer per ATP hydrolyzed, thus driving DNA branch migration. The RuvB motors rotate together with the DNA substrate, which together with the progressing nucleotide cycle form the mechanistic basis for DNA recombination by continuous HJ branch migration. Branch migration allows RuvC to scan DNA until it finds its consensus sequence, where it cleaves and resolves cruciform DNA. This Legionella pneumophila subsp. pneumophila (strain Philadelphia 1 / ATCC 33152 / DSM 7513) protein is Holliday junction branch migration complex subunit RuvB.